Consider the following 506-residue polypeptide: NAD(P)H-quinone oxidoreductase subunit 2 (506 aa).

14 consecutive transmembrane segments (helical) span residues 14-34 (AIIP…VDLA), 42-62 (WAPV…ALQW), 79-99 (LAIA…LISW), 108-128 (PIGE…LLCG), 132-152 (LVSV…LSGY), 167-187 (LLVG…LYGL), 206-226 (FITS…IAAV), 240-260 (PTPV…AFAI), 276-296 (LLFT…ALAQ), 302-322 (MLAY…VSGT), 330-350 (VLYL…VILF), 374-394 (LGLS…GFFG), 409-429 (LLVV…ISVI), and 462-482 (IALY…NPLF).

Belongs to the complex I subunit 2 family. In terms of assembly, NDH-1 can be composed of about 15 different subunits; different subcomplexes with different compositions have been identified which probably have different functions.

The protein localises to the cellular thylakoid membrane. The enzyme catalyses a plastoquinone + NADH + (n+1) H(+)(in) = a plastoquinol + NAD(+) + n H(+)(out). It carries out the reaction a plastoquinone + NADPH + (n+1) H(+)(in) = a plastoquinol + NADP(+) + n H(+)(out). NDH-1 shuttles electrons from an unknown electron donor, via FMN and iron-sulfur (Fe-S) centers, to quinones in the respiratory and/or the photosynthetic chain. The immediate electron acceptor for the enzyme in this species is believed to be plastoquinone. Couples the redox reaction to proton translocation, and thus conserves the redox energy in a proton gradient. Cyanobacterial NDH-1 also plays a role in inorganic carbon-concentration. This is NAD(P)H-quinone oxidoreductase subunit 2 from Prochlorococcus marinus subsp. pastoris (strain CCMP1986 / NIES-2087 / MED4).